We begin with the raw amino-acid sequence, 382 residues long: Succinyl-diaminopimelate desuccinylase (382 aa).

Histidine 73 serves as a coordination point for Zn(2+). The active site involves aspartate 75. A Zn(2+)-binding site is contributed by aspartate 106. The Proton acceptor role is filled by glutamate 140. Residues glutamate 141, glutamate 169, and histidine 355 each contribute to the Zn(2+) site.

The protein belongs to the peptidase M20A family. DapE subfamily. As to quaternary structure, homodimer. It depends on Zn(2+) as a cofactor. Requires Co(2+) as cofactor.

The enzyme catalyses N-succinyl-(2S,6S)-2,6-diaminopimelate + H2O = (2S,6S)-2,6-diaminopimelate + succinate. The protein operates within amino-acid biosynthesis; L-lysine biosynthesis via DAP pathway; LL-2,6-diaminopimelate from (S)-tetrahydrodipicolinate (succinylase route): step 3/3. Catalyzes the hydrolysis of N-succinyl-L,L-diaminopimelic acid (SDAP), forming succinate and LL-2,6-diaminopimelate (DAP), an intermediate involved in the bacterial biosynthesis of lysine and meso-diaminopimelic acid, an essential component of bacterial cell walls. The protein is Succinyl-diaminopimelate desuccinylase of Cellvibrio japonicus (strain Ueda107) (Pseudomonas fluorescens subsp. cellulosa).